Reading from the N-terminus, the 310-residue chain is N-acetyl-gamma-glutamyl-phosphate reductase (310 aa).

The active site involves C117.

The protein belongs to the NAGSA dehydrogenase family. Type 2 subfamily.

The protein resides in the cytoplasm. It carries out the reaction N-acetyl-L-glutamate 5-semialdehyde + phosphate + NADP(+) = N-acetyl-L-glutamyl 5-phosphate + NADPH + H(+). The protein operates within amino-acid biosynthesis; L-arginine biosynthesis; N(2)-acetyl-L-ornithine from L-glutamate: step 3/4. Functionally, catalyzes the NADPH-dependent reduction of N-acetyl-5-glutamyl phosphate to yield N-acetyl-L-glutamate 5-semialdehyde. The chain is N-acetyl-gamma-glutamyl-phosphate reductase from Rhizobium leguminosarum bv. trifolii (strain WSM2304).